Here is a 331-residue protein sequence, read N- to C-terminus: uncharacterized protein (331 aa).

The protein to bacterial alkanal monooxygenase alpha and beta chains.

This is an uncharacterized protein from Bacillus subtilis (strain 168).